An 825-amino-acid polypeptide reads, in one-letter code: KH domain-containing protein YLL032C (825 aa).

In terms of domain architecture, KH spans 482–556 (PAEESFFIPE…ANICLAKNDL (75 aa)). Positions 727–740 (SSKSNTSNSNTNGN) are enriched in low complexity. Positions 727–766 (SSKSNTSNSNTNGNFRSMNNAKSRTTIDNTSQSGASPQRH) are disordered. Polar residues predominate over residues 741–762 (FRSMNNAKSRTTIDNTSQSGAS). At serine 762 the chain carries Phosphoserine.

It localises to the cytoplasm. The protein is KH domain-containing protein YLL032C of Saccharomyces cerevisiae (strain ATCC 204508 / S288c) (Baker's yeast).